Consider the following 382-residue polypeptide: Ferredoxin--NADP reductase, root isozyme 2, chloroplastic (382 aa).

The N-terminal 64 residues, 1 to 64 (MSHSAVSQAG…DGKRYPSTTI (64 aa)), are a transit peptide targeting the chloroplast. The 129-residue stretch at 97 to 225 (KESYTAKIVS…TGPSGKVMLL (129 aa)) folds into the FAD-binding FR-type domain. Cysteines 200 and 205 form a disulfide. Ser-201 carries the phosphoserine modification. Thr-233 is modified (phosphothreonine). 235–253 (IMIATGTGVAPYRGYLRRM) contributes to the NADP(+) binding site.

The protein belongs to the ferredoxin--NADP reductase type 1 family. It depends on FAD as a cofactor. As to expression, expressed in shoots and roots. More abundant in roots than RFNR1.

The protein localises to the plastid. Its subcellular location is the chloroplast. It catalyses the reaction 2 reduced [2Fe-2S]-[ferredoxin] + NADP(+) + H(+) = 2 oxidized [2Fe-2S]-[ferredoxin] + NADPH. Functionally, maintains the supply of reduced ferredoxin under non-photosynthetic conditions. The protein is Ferredoxin--NADP reductase, root isozyme 2, chloroplastic (RFNR2) of Arabidopsis thaliana (Mouse-ear cress).